Reading from the N-terminus, the 517-residue chain is MDIIGGQHLRQMWDDLADVYGHKTALICESSGGVVNRYSYLELNQEINRTANLFYTLGIRKGDKVALHLDNCPEFIFCWFGLAKIGAIMVPINARLLCEESAWILQNSQACLLVTSAQFYPMYQQIQQEDATQLRHICLTDVALPADDGVSSFTQLKNQQPATLCYAPPLSTDDTAEILFTSGTTSRPKGVVITHYNLRFAGYYSAWQCALRDDDVYLTVMPAFHIDCQCTAAMAAFSAGATFVLVEKYSARAFWGQVQKYRATVTECIPMMIRTLMVQPPSANDQQHRLREVMFYLNLSEQEKDAFCERFGVRLLTSYGMTETIVGIIGDRPGDKRRWPSIGRVGFCYEAEIRDDHNRPLPAGEIGEICIKGIPGKTIFKEYFLNPQATAKVLEADGWLHTGDTGYRDEEGFFYFVDRRCNMIKRGGENVSCVELENIIAAHPKIQDIVVVGIKDSIRDEAIKAFVVLNEGETLSEEEFFRFCEQNMAKFKVPSYLEIRKDLPRNCSGKIIRKNLK.

This sequence belongs to the ATP-dependent AMP-binding enzyme family.

The catalysed reaction is 4-(trimethylamino)butanoate + ATP + CoA = 4-(trimethylamino)butanoyl-CoA + AMP + diphosphate. The enzyme catalyses crotonobetaine + ATP + CoA = crotonobetainyl-CoA + AMP + diphosphate. It catalyses the reaction (R)-carnitine + ATP + CoA = (R)-carnitinyl-CoA + AMP + diphosphate. Its pathway is amine and polyamine metabolism; carnitine metabolism. Its function is as follows. Catalyzes the transfer of CoA to carnitine, generating the initial carnitinyl-CoA needed for the CaiB reaction cycle. Also has activity toward crotonobetaine and gamma-butyrobetaine. The polypeptide is Crotonobetaine/carnitine--CoA ligase (Escherichia coli (strain ATCC 8739 / DSM 1576 / NBRC 3972 / NCIMB 8545 / WDCM 00012 / Crooks)).